The chain runs to 252 residues: NADH-quinone oxidoreductase subunit E (252 aa).

[2Fe-2S] cluster contacts are provided by cysteine 114, cysteine 119, cysteine 155, and cysteine 159. Residues 211-252 (LAGLPDQRPDEGQGGPGAPTLAGLQVARKNDMQAPPTPGADE) are disordered.

Belongs to the complex I 24 kDa subunit family. The cofactor is [2Fe-2S] cluster.

It carries out the reaction a quinone + NADH + 5 H(+)(in) = a quinol + NAD(+) + 4 H(+)(out). In terms of biological role, NDH-1 shuttles electrons from NADH, via FMN and iron-sulfur (Fe-S) centers, to quinones in the respiratory chain. The immediate electron acceptor for the enzyme in this species is believed to be menaquinone. Couples the redox reaction to proton translocation (for every two electrons transferred, four hydrogen ions are translocated across the cytoplasmic membrane), and thus conserves the redox energy in a proton gradient. The sequence is that of NADH-quinone oxidoreductase subunit E (nuoE) from Mycobacterium bovis (strain ATCC BAA-935 / AF2122/97).